A 208-amino-acid polypeptide reads, in one-letter code: Octanoyltransferase (208 aa).

The BPL/LPL catalytic domain occupies 29 to 208 (KTQDELVWLL…KEFNKVFCNC (180 aa)). Residues 68–75 (RGGKYTYH), 140–142 (AFG), and 153–155 (GVS) contribute to the substrate site. Cys-171 acts as the Acyl-thioester intermediate in catalysis.

This sequence belongs to the LipB family.

Its subcellular location is the cytoplasm. It carries out the reaction octanoyl-[ACP] + L-lysyl-[protein] = N(6)-octanoyl-L-lysyl-[protein] + holo-[ACP] + H(+). It functions in the pathway protein modification; protein lipoylation via endogenous pathway; protein N(6)-(lipoyl)lysine from octanoyl-[acyl-carrier-protein]: step 1/2. Catalyzes the transfer of endogenously produced octanoic acid from octanoyl-acyl-carrier-protein onto the lipoyl domains of lipoate-dependent enzymes. Lipoyl-ACP can also act as a substrate although octanoyl-ACP is likely to be the physiological substrate. The polypeptide is Octanoyltransferase (Ehrlichia ruminantium (strain Gardel)).